Here is a 791-residue protein sequence, read N- to C-terminus: Diacylglycerol kinase gamma (791 aa).

2 disordered regions span residues Lys82–Ala103 and Asp117–Ser154. Residues Pro83–Thr92 are compositionally biased toward basic and acidic residues. Residues Gly94–Ala103 show a composition bias toward polar residues. EF-hand domains follow at residues Arg175–Ile210 and Glu220–Leu255. Ca(2+) is bound by residues Asp188, Asp190, Asn192, Glu199, Asp233, Asp235, Asp237, and Glu244. 2 consecutive Phorbol-ester/DAG-type zinc fingers follow at residues Arg271–Cys321 and Gln336–Gly385. The 135-residue stretch at Pro430–Pro564 folds into the DAGKc domain. The interval Ala768–Asp791 is disordered.

The protein belongs to the eukaryotic diacylglycerol kinase family. In terms of tissue distribution, predominantly expressed in retina and in a much lesser extent in the brain. Other tissues contain extremely low levels of DGK-gamma.

It localises to the membrane. It is found in the cytoplasm. The protein localises to the cytosol. The protein resides in the cytoskeleton. The enzyme catalyses a 1,2-diacyl-sn-glycerol + ATP = a 1,2-diacyl-sn-glycero-3-phosphate + ADP + H(+). It carries out the reaction 1,2-didecanoyl-sn-glycerol + ATP = 1,2-didecanoyl-sn-glycero-3-phosphate + ADP + H(+). The catalysed reaction is 1-octadecanoyl-2-(5Z,8Z,11Z,14Z-eicosatetraenoyl)-sn-glycerol + ATP = 1-octadecanoyl-2-(5Z,8Z,11Z,14Z-eicosatetraenoyl)-sn-glycero-3-phosphate + ADP + H(+). It catalyses the reaction 1,2-di-(9Z-octadecenoyl)-sn-glycerol + ATP = 1,2-di-(9Z-octadecenoyl)-sn-glycero-3-phosphate + ADP + H(+). The enzyme catalyses 1-octadecanoyl-2-(9Z,12Z)-octadecadienoyl-sn-glycerol + ATP = 1-octadecanoyl-2-(9Z,12Z-octadecadienoyl)-sn-glycero-3-phosphate + ADP + H(+). It participates in lipid metabolism; glycerolipid metabolism. Its activity is regulated as follows. The activity is calcium-dependent. Requires phosphatidylserine for maximal activity. Functionally, diacylglycerol kinase that converts diacylglycerol/DAG into phosphatidic acid/phosphatidate/PA and regulates the respective levels of these two bioactive lipids. Thereby, acts as a central switch between the signaling pathways activated by these second messengers with different cellular targets and opposite effects in numerous biological processes. Has no apparent specificity with regard to the acyl compositions of diacylglycerol. Specifically expressed in the cerebellum where it controls the level of diacylglycerol which in turn regulates the activity of protein kinase C gamma. Through protein kinase C gamma, indirectly regulates the dendritic development of Purkinje cells, cerebellar long term depression and ultimately cerebellar motor coordination. The protein is Diacylglycerol kinase gamma (DGKG) of Homo sapiens (Human).